Here is a 503-residue protein sequence, read N- to C-terminus: Aminoaldehyde dehydrogenase 2, peroxisomal (503 aa).

Residues isoleucine 28 and aspartate 99 each coordinate Na(+). NAD(+)-binding residues include tryptophan 161 and lysine 185. Leucine 189 lines the Na(+) pocket. Serine 239 is an NAD(+) binding site. The Proton acceptor role is filled by glutamate 260. Catalysis depends on cysteine 294, which acts as the Nucleophile. A Microbody targeting signal motif is present at residues 501 to 503 (AKL).

This sequence belongs to the aldehyde dehydrogenase family. As to quaternary structure, forms homodimers.

Its subcellular location is the peroxisome. The enzyme catalyses 3-aminopropanal + NAD(+) + H2O = beta-alanine + NADH + 2 H(+). It catalyses the reaction 4-aminobutanal + NAD(+) + H2O = 4-aminobutanoate + NADH + 2 H(+). It carries out the reaction 4-guanidinobutanal + NAD(+) + H2O = 4-guanidinobutanoate + NADH + 2 H(+). It participates in amine and polyamine biosynthesis; betaine biosynthesis via choline pathway; betaine from betaine aldehyde: step 1/1. Its function is as follows. Dehydrogenase that catalyzes the oxidation of several aminoaldehydes. Metabolizes and detoxifies aldehyde products of polyamine degradation to non-toxic amino acids. Catalyzes the oxidation of 3-aminopropanal to beta-alanine. Catalyzes the oxidation of 4-aminobutanal to 4-aminobutanoate. Catalyzes the oxidation of 4-guanidinobutanal to 4-guanidinobutanoate. The protein is Aminoaldehyde dehydrogenase 2, peroxisomal of Pisum sativum (Garden pea).